A 49-amino-acid chain; its full sequence is Osteocalcin (49 aa).

The region spanning Tyr-1–Gly-47 is the Gla domain. Residue Pro-9 is modified to Hydroxyproline. Ca(2+) contacts are provided by Glu-17, Glu-21, Glu-24, and Asp-30. Glu-17, Glu-21, and Glu-24 each carry 4-carboxyglutamate. Cys-23 and Cys-29 form a disulfide bridge.

The protein belongs to the osteocalcin/matrix Gla protein family. Post-translationally, gamma-carboxyglutamic acid residues are formed by vitamin K dependent carboxylation. These residues are essential for the binding of calcium.

Its subcellular location is the secreted. Its function is as follows. The carboxylated form is one of the main organic components of the bone matrix, which constitutes 1-2% of the total bone protein: it acts as a negative regulator of bone formation and is required to limit bone formation without impairing bone resorption or mineralization. The carboxylated form binds strongly to apatite and calcium. The uncarboxylated form acts as a hormone secreted by osteoblasts, which regulates different cellular processes, such as energy metabolism, male fertility and brain development. Regulates of energy metabolism by acting as a hormone favoring pancreatic beta-cell proliferation, insulin secretion and sensitivity and energy expenditure. Uncarboxylated osteocalcin hormone also promotes testosterone production in the testes: acts as a ligand for G protein-coupled receptor GPRC6A at the surface of Leydig cells, initiating a signaling response that promotes the expression of enzymes required for testosterone synthesis in a CREB-dependent manner. Also acts as a regulator of brain development: osteocalcin hormone crosses the blood-brain barrier and acts as a ligand for GPR158 on neurons, initiating a signaling response that prevents neuronal apoptosis in the hippocampus, favors the synthesis of all monoamine neurotransmitters and inhibits that of gamma-aminobutyric acid (GABA). Osteocalcin also crosses the placenta during pregnancy and maternal osteocalcin is required for fetal brain development. This Bison priscus (Steppe wisent) protein is Osteocalcin (BGLAP).